Here is a 315-residue protein sequence, read N- to C-terminus: Porphobilinogen deaminase (315 aa).

Cys-242 is subject to S-(dipyrrolylmethanemethyl)cysteine.

Belongs to the HMBS family. Monomer. Dipyrromethane is required as a cofactor.

The enzyme catalyses 4 porphobilinogen + H2O = hydroxymethylbilane + 4 NH4(+). The protein operates within porphyrin-containing compound metabolism; protoporphyrin-IX biosynthesis; coproporphyrinogen-III from 5-aminolevulinate: step 2/4. Tetrapolymerization of the monopyrrole PBG into the hydroxymethylbilane pre-uroporphyrinogen in several discrete steps. This is Porphobilinogen deaminase from Syntrophotalea carbinolica (strain DSM 2380 / NBRC 103641 / GraBd1) (Pelobacter carbinolicus).